Reading from the N-terminus, the 95-residue chain is Beta-defensin 132 (95 aa).

The N-terminal stretch at 1 to 22 is a signal peptide; that stretch reads MKFLLLVLAALGFLTQVIPASA. 3 cysteine pairs are disulfide-bonded: Cys-27–Cys-55, Cys-35–Cys-49, and Cys-39–Cys-56. The segment at 74–95 is disordered; that stretch reads HWQSRRRNTQRKDKKQQTTVTS. Positions 76–87 are enriched in basic residues; that stretch reads QSRRRNTQRKDK.

This sequence belongs to the beta-defensin family.

It is found in the secreted. Has antibacterial activity. This is Beta-defensin 132 (DEFB132) from Homo sapiens (Human).